The primary structure comprises 430 residues: Putative membrane fusion protein SilB (430 aa).

The first 28 residues, 1 to 28, serve as a signal peptide directing secretion; the sequence is MASLKIKYAAIIISSLIAGGLISVTAWQ. The interval 407–430 is disordered; that stretch reads RHPEKTENSMPAMSEQPVNMHSGH. Polar residues predominate over residues 414–430; the sequence is NSMPAMSEQPVNMHSGH.

The protein belongs to the membrane fusion protein (MFP) (TC 8.A.1) family.

Its function is as follows. Component of the sil cation efflux system that confers resistance to silver. May be part of a three-component cation/proton antiporter. This is Putative membrane fusion protein SilB (silB) from Salmonella typhimurium.